Reading from the N-terminus, the 504-residue chain is Maturase K (504 aa).

It belongs to the intron maturase 2 family. MatK subfamily.

Its subcellular location is the plastid. It is found in the chloroplast. Usually encoded in the trnK tRNA gene intron. Probably assists in splicing its own and other chloroplast group II introns. This chain is Maturase K, found in Quercus rubra (Northern red oak).